An 852-amino-acid chain; its full sequence is Replication factor C small subunit (852 aa).

In terms of domain architecture, DOD-type homing endonuclease spans 183–306; that stretch reads WLGYFMGSGY…IAYALASFGI (124 aa).

This sequence belongs to the activator 1 small subunits family. RfcS subfamily. In terms of assembly, heteromultimer composed of three to four small subunits (RfcS) and one to two large subunits (RfcL). In terms of processing, this protein undergoes a protein self splicing that involves a post-translational excision of the intervening region (intein) followed by peptide ligation.

Functionally, part of the RFC clamp loader complex which loads the PCNA sliding clamp onto DNA. The complex possesses DNA-dependent ATPase activity which is further stimulated by PCNA. The protein is Replication factor C small subunit (rfcS) of Pyrococcus furiosus (strain ATCC 43587 / DSM 3638 / JCM 8422 / Vc1).